The chain runs to 213 residues: Macrodontain-1 (213 aa).

3 disulfide bridges follow: Cys-23–Cys-63, Cys-57–Cys-96, and Cys-153–Cys-201. Cys-26 is an active-site residue. Active-site residues include His-159 and Asn-176.

In terms of assembly, monomer. Fruits.

With respect to regulation, inhibited by the general cysteine protease inhibitor E64 (L-trans-epoxysuccinyl-leucylamide-(4-guanido)-butane). Functionally, cysteine protease that catalyzes the preferential cleavage: Ala-|-Xaa &gt; Gln-|-Xaa &gt; Tyr-Xaa &gt;&gt; Leu-|-Xaa &gt; Gly-|-Xaa. Hydrolyzes the synthetic peptide substrate Bz-Phe-Val-Arg-pNA. This Ananas macrodontes (False pineapple) protein is Macrodontain-1.